We begin with the raw amino-acid sequence, 291 residues long: NAD kinase (291 aa).

Aspartate 72 serves as the catalytic Proton acceptor. NAD(+) contacts are provided by residues 72 to 73 (DG), 146 to 147 (ND), arginine 157, arginine 174, aspartate 176, 187 to 192 (TAYSLS), and glutamine 247.

The protein belongs to the NAD kinase family. A divalent metal cation serves as cofactor.

It is found in the cytoplasm. It carries out the reaction NAD(+) + ATP = ADP + NADP(+) + H(+). In terms of biological role, involved in the regulation of the intracellular balance of NAD and NADP, and is a key enzyme in the biosynthesis of NADP. Catalyzes specifically the phosphorylation on 2'-hydroxyl of the adenosine moiety of NAD to yield NADP. In Hydrogenovibrio crunogenus (strain DSM 25203 / XCL-2) (Thiomicrospira crunogena), this protein is NAD kinase.